The following is a 347-amino-acid chain: FK506-binding protein-like (347 aa).

Residues 1–24 (METSPISPMNEKNTAQPQQREENA) are disordered. Phosphothreonine is present on threonine 3. TPR repeat units follow at residues 208-241 (AKEE…LLTL), 250-283 (TTLY…EPGH), and 284-317 (LKAL…DPKN).

As to quaternary structure, forms a ternary complex with CDKN1A/p21 and HSP90AB1/Hsp90.

Functionally, may be involved in response to X-ray. Regulates p21 protein stability by binding to Hsp90 and p21. In Mus musculus (Mouse), this protein is FK506-binding protein-like (Fkbpl).